The chain runs to 543 residues: Protein P78/83 (543 aa).

Disordered stretches follow at residues 147–222, 235–325, and 373–400; these read QALP…QPAA, RNEK…SLSN, and MAKS…ANTP. Residues 182 to 221 show a composition bias toward pro residues; it reads AAPPPPPSPVPNIPAPPPPPPPSMSELPPAPPMPTEPQPA. Residues 226–246 enclose the WH2 domain; that stretch reads DRQQLLEAIRNEKNRTRLRPV. The segment covering 271–321 has biased composition (pro residues); sequence PKPPSASPPPPPPPPPPPAPPAPPPMVDLSSAPPPPPLVDLPSEMLPPPAP. Over residues 375–384 the composition is skewed to polar residues; it reads KSSSEATSND.

In terms of assembly, forms a complex with proteins C42 and E27. Interacts with host actin-related protein 2/3 complex. Interacts with protein Ac102.

It is found in the host cytoplasm. Its subcellular location is the host nucleus. Plays a role in the transport of the nucleocapsids from the cytoplasm toward the host nucleus together with the host actin-polymerizing Arp2/3 complex. The protein is Protein P78/83 (P61) of Lepidoptera (butterflies and moths).